A 466-amino-acid chain; its full sequence is UDP-N-acetylmuramoylalanine--D-glutamate ligase (466 aa).

124–130 (GSDGKTT) is an ATP binding site.

Belongs to the MurCDEF family.

It is found in the cytoplasm. It catalyses the reaction UDP-N-acetyl-alpha-D-muramoyl-L-alanine + D-glutamate + ATP = UDP-N-acetyl-alpha-D-muramoyl-L-alanyl-D-glutamate + ADP + phosphate + H(+). It participates in cell wall biogenesis; peptidoglycan biosynthesis. Its function is as follows. Cell wall formation. Catalyzes the addition of glutamate to the nucleotide precursor UDP-N-acetylmuramoyl-L-alanine (UMA). This is UDP-N-acetylmuramoylalanine--D-glutamate ligase from Acetivibrio thermocellus (strain ATCC 27405 / DSM 1237 / JCM 9322 / NBRC 103400 / NCIMB 10682 / NRRL B-4536 / VPI 7372) (Clostridium thermocellum).